The chain runs to 88 residues: Small ribosomal subunit protein bS20 (88 aa).

The protein belongs to the bacterial ribosomal protein bS20 family.

Its function is as follows. Binds directly to 16S ribosomal RNA. The protein is Small ribosomal subunit protein bS20 of Clostridium kluyveri (strain NBRC 12016).